The chain runs to 477 residues: tRNA-2-methylthio-N(6)-dimethylallyladenosine synthase (477 aa).

The MTTase N-terminal domain occupies 3-120 (KKLHIKTWGC…LPTMIKQVQE (118 aa)). [4Fe-4S] cluster is bound by residues Cys12, Cys49, Cys83, Cys157, Cys161, and Cys164. The region spanning 143-375 (RAEGATAFVS…QHVINNQSMQ (233 aa)) is the Radical SAM core domain. The TRAM domain occupies 378–441 (RAMLGSTQRI…PNSLRGKFLR (64 aa)).

This sequence belongs to the methylthiotransferase family. MiaB subfamily. In terms of assembly, monomer. It depends on [4Fe-4S] cluster as a cofactor.

It is found in the cytoplasm. It carries out the reaction N(6)-dimethylallyladenosine(37) in tRNA + (sulfur carrier)-SH + AH2 + 2 S-adenosyl-L-methionine = 2-methylsulfanyl-N(6)-dimethylallyladenosine(37) in tRNA + (sulfur carrier)-H + 5'-deoxyadenosine + L-methionine + A + S-adenosyl-L-homocysteine + 2 H(+). Its function is as follows. Catalyzes the methylthiolation of N6-(dimethylallyl)adenosine (i(6)A), leading to the formation of 2-methylthio-N6-(dimethylallyl)adenosine (ms(2)i(6)A) at position 37 in tRNAs that read codons beginning with uridine. This Aeromonas hydrophila subsp. hydrophila (strain ATCC 7966 / DSM 30187 / BCRC 13018 / CCUG 14551 / JCM 1027 / KCTC 2358 / NCIMB 9240 / NCTC 8049) protein is tRNA-2-methylthio-N(6)-dimethylallyladenosine synthase.